We begin with the raw amino-acid sequence, 472 residues long: RNA pseudouridine synthase 6, chloroplastic (472 aa).

The transit peptide at Met-1 to Ser-66 directs the protein to the chloroplast. One can recognise an S4 RNA-binding domain in the interval Val-101 to Lys-208. Residue Asp-261 is part of the active site.

Belongs to the pseudouridine synthase RluA family.

The protein resides in the plastid. It is found in the chloroplast. It carries out the reaction a uridine in RNA = a pseudouridine in RNA. This is RNA pseudouridine synthase 6, chloroplastic from Arabidopsis thaliana (Mouse-ear cress).